Reading from the N-terminus, the 312-residue chain is Glyoxylate/hydroxypyruvate reductase A (312 aa).

Residue Arg227 is part of the active site. His275 functions as the Proton donor in the catalytic mechanism.

It belongs to the D-isomer specific 2-hydroxyacid dehydrogenase family. GhrA subfamily.

It is found in the cytoplasm. It carries out the reaction glycolate + NADP(+) = glyoxylate + NADPH + H(+). The enzyme catalyses (R)-glycerate + NAD(+) = 3-hydroxypyruvate + NADH + H(+). It catalyses the reaction (R)-glycerate + NADP(+) = 3-hydroxypyruvate + NADPH + H(+). In terms of biological role, catalyzes the NADPH-dependent reduction of glyoxylate and hydroxypyruvate into glycolate and glycerate, respectively. The chain is Glyoxylate/hydroxypyruvate reductase A from Shigella boydii serotype 18 (strain CDC 3083-94 / BS512).